The following is a 313-amino-acid chain: Oxaloacetate tautomerase Fahd2a, mitochondrial (313 aa).

A mitochondrion-targeting transit peptide spans 1 to 84; that stretch reads MLGSGRRRLL…TALSVARRAL (84 aa). Mg(2+) contacts are provided by Glu-159, Glu-161, and Asp-190. An N6-acetyllysine; alternate modification is found at Lys-202. N6-succinyllysine; alternate is present on Lys-202. Lys-233 bears the N6-acetyllysine mark.

Belongs to the FAH family. Mg(2+) is required as a cofactor. The cofactor is Mn(2+).

The protein localises to the mitochondrion. It catalyses the reaction oxaloacetate = enol-oxaloacetate. Its function is as follows. Tautomerase that converts enol-oxaloacetate, a strong inhibitor of succinate dehydrogenase, to the physiological keto form of oxaloacetate. It is thereby required to maximize aerobic respiration efficiency by preventing succinate dehydrogenase inhibition. This is Oxaloacetate tautomerase Fahd2a, mitochondrial from Rattus norvegicus (Rat).